Consider the following 222-residue polypeptide: NADH dehydrogenase [ubiquinone] iron-sulfur protein 8-A, mitochondrial (222 aa).

2 4Fe-4S ferredoxin-type domains span residues 114 to 143 (RRYPTGEERCIACKLCEAVCPAQAITIEAE) and 153 to 182 (TRYDIDMTKCIYCGFCQEACPVDAIVEGPN). Cysteine 123, cysteine 126, cysteine 129, cysteine 133, cysteine 162, cysteine 165, cysteine 168, and cysteine 172 together coordinate [4Fe-4S] cluster.

The protein belongs to the complex I 23 kDa subunit family. As to quaternary structure, complex I is composed of at least 49 different subunits. This is a component of the iron-sulfur (IP) fragment of the enzyme. The cofactor is [4Fe-4S] cluster.

The protein localises to the mitochondrion. It catalyses the reaction a ubiquinone + NADH + 5 H(+)(in) = a ubiquinol + NAD(+) + 4 H(+)(out). Its function is as follows. Core subunit of the mitochondrial membrane respiratory chain NADH dehydrogenase (Complex I) that is believed to belong to the minimal assembly required for catalysis. Complex I functions in the transfer of electrons from NADH to the respiratory chain. The immediate electron acceptor for the enzyme is believed to be ubiquinone. May donate electrons to ubiquinone. The protein is NADH dehydrogenase [ubiquinone] iron-sulfur protein 8-A, mitochondrial of Arabidopsis thaliana (Mouse-ear cress).